The following is an 89-amino-acid chain: MVKLRLKRCGRKQRAIYRIVAIDVRSQREGRDLRKVGFYDPIKNQTYSNVPAILYFLEKGAQPTGTVHDISKKAEVFKELRINQTKSNK.

Belongs to the bacterial ribosomal protein bS16 family.

It is found in the plastid. The protein resides in the chloroplast. The protein is Small ribosomal subunit protein bS16c of Drimys granadensis.